The sequence spans 370 residues: Holliday junction branch migration complex subunit RuvB (370 aa).

The tract at residues 1–182 is large ATPase domain (RuvB-L); that stretch reads MDERMMTSAK…FGVIHRLEYY (182 aa). ATP contacts are provided by residues Leu-21, Arg-22, Gly-63, Lys-66, Thr-67, Thr-68, 129 to 131, Arg-172, Tyr-182, and Arg-219; that span reads EDF. Residue Thr-67 coordinates Mg(2+). The small ATPAse domain (RuvB-S) stretch occupies residues 183–253; the sequence is RPDELEFIIL…VAREALRRLE (71 aa). The segment at 256–370 is head domain (RuvB-H); that stretch reads PRGLDTTDQR…AEQAALSFDE (115 aa). 2 residues coordinate DNA: Arg-311 and Arg-316.

This sequence belongs to the RuvB family. As to quaternary structure, homohexamer. Forms an RuvA(8)-RuvB(12)-Holliday junction (HJ) complex. HJ DNA is sandwiched between 2 RuvA tetramers; dsDNA enters through RuvA and exits via RuvB. An RuvB hexamer assembles on each DNA strand where it exits the tetramer. Each RuvB hexamer is contacted by two RuvA subunits (via domain III) on 2 adjacent RuvB subunits; this complex drives branch migration. In the full resolvosome a probable DNA-RuvA(4)-RuvB(12)-RuvC(2) complex forms which resolves the HJ.

The protein resides in the cytoplasm. It catalyses the reaction ATP + H2O = ADP + phosphate + H(+). Functionally, the RuvA-RuvB-RuvC complex processes Holliday junction (HJ) DNA during genetic recombination and DNA repair, while the RuvA-RuvB complex plays an important role in the rescue of blocked DNA replication forks via replication fork reversal (RFR). RuvA specifically binds to HJ cruciform DNA, conferring on it an open structure. The RuvB hexamer acts as an ATP-dependent pump, pulling dsDNA into and through the RuvAB complex. RuvB forms 2 homohexamers on either side of HJ DNA bound by 1 or 2 RuvA tetramers; 4 subunits per hexamer contact DNA at a time. Coordinated motions by a converter formed by DNA-disengaged RuvB subunits stimulates ATP hydrolysis and nucleotide exchange. Immobilization of the converter enables RuvB to convert the ATP-contained energy into a lever motion, pulling 2 nucleotides of DNA out of the RuvA tetramer per ATP hydrolyzed, thus driving DNA branch migration. The RuvB motors rotate together with the DNA substrate, which together with the progressing nucleotide cycle form the mechanistic basis for DNA recombination by continuous HJ branch migration. Branch migration allows RuvC to scan DNA until it finds its consensus sequence, where it cleaves and resolves cruciform DNA. This chain is Holliday junction branch migration complex subunit RuvB, found in Heliobacterium modesticaldum (strain ATCC 51547 / Ice1).